A 383-amino-acid polypeptide reads, in one-letter code: Large ribosomal subunit protein uL2m (383 aa).

2 disordered regions span residues 97–122 (FPKK…GGGH) and 322–357 (MNAN…YKTR). 2 stretches are compositionally biased toward basic residues: residues 106–122 (GRNH…GGGH) and 330–340 (GGGRGKSKGNR).

It belongs to the universal ribosomal protein uL2 family. Component of the mitochondrial large ribosomal subunit (mt-LSU). Mature N.crassa 74S mitochondrial ribosomes consist of a small (37S) and a large (54S) subunit. The 37S small subunit contains a 16S ribosomal RNA (16S mt-rRNA) and 32 different proteins. The 54S large subunit contains a 23S rRNA (23S mt-rRNA) and 42 different proteins.

It is found in the mitochondrion. Functionally, component of the mitochondrial ribosome (mitoribosome), a dedicated translation machinery responsible for the synthesis of mitochondrial genome-encoded proteins, including at least some of the essential transmembrane subunits of the mitochondrial respiratory chain. The mitoribosomes are attached to the mitochondrial inner membrane and translation products are cotranslationally integrated into the membrane. This is Large ribosomal subunit protein uL2m (rml2) from Neurospora crassa (strain ATCC 24698 / 74-OR23-1A / CBS 708.71 / DSM 1257 / FGSC 987).